Consider the following 113-residue polypeptide: Immunoglobulin lambda variable 2-23 (113 aa).

The signal sequence occupies residues 1-19; it reads MAWALLLLTLLTQDTGSWA. The residue at position 20 (Gln-20) is a Pyrrolidone carboxylic acid. Residues 20 to 44 are framework-1; that stretch reads QSALTQPASVSGSPGQSITISCTGT. The region spanning 20–113 is the Ig-like domain; that stretch reads QSALTQPASV…EADYYCCSYA (94 aa). Cys-41 and Cys-109 form a disulfide bridge. The interval 45 to 53 is complementarity-determining-1; the sequence is SSDVGSYNL. The framework-2 stretch occupies residues 54-70; sequence VSWYQQHPGKAPKLMIY. The segment at 71 to 73 is complementarity-determining-2; that stretch reads EGS. A disordered region spans residues 73-92; sequence SKRPSGVSNRFSGSKSGNTA. The tract at residues 74 to 109 is framework-3; it reads KRPSGVSNRFSGSKSGNTASLTISGLQAEDEADYYC. Residues 78-92 show a composition bias toward polar residues; it reads GVSNRFSGSKSGNTA. Positions 110-113 are complementarity-determining-3; that stretch reads CSYA.

Immunoglobulins are composed of two identical heavy chains and two identical light chains; disulfide-linked.

The protein localises to the secreted. It localises to the cell membrane. V region of the variable domain of immunoglobulin light chains that participates in the antigen recognition. Immunoglobulins, also known as antibodies, are membrane-bound or secreted glycoproteins produced by B lymphocytes. In the recognition phase of humoral immunity, the membrane-bound immunoglobulins serve as receptors which, upon binding of a specific antigen, trigger the clonal expansion and differentiation of B lymphocytes into immunoglobulins-secreting plasma cells. Secreted immunoglobulins mediate the effector phase of humoral immunity, which results in the elimination of bound antigens. The antigen binding site is formed by the variable domain of one heavy chain, together with that of its associated light chain. Thus, each immunoglobulin has two antigen binding sites with remarkable affinity for a particular antigen. The variable domains are assembled by a process called V-(D)-J rearrangement and can then be subjected to somatic hypermutations which, after exposure to antigen and selection, allow affinity maturation for a particular antigen. The chain is Immunoglobulin lambda variable 2-23 from Homo sapiens (Human).